The primary structure comprises 779 residues: Endonuclease MutS2 (779 aa).

328-335 (GPNTGGKT) is a binding site for ATP. Residues 704 to 779 (LDLRGKRYEE…GSGATIVTLG (76 aa)) form the Smr domain.

The protein belongs to the DNA mismatch repair MutS family. MutS2 subfamily. In terms of assembly, homodimer. Binds to stalled ribosomes, contacting rRNA.

Its function is as follows. Endonuclease that is involved in the suppression of homologous recombination and thus may have a key role in the control of bacterial genetic diversity. Functionally, acts as a ribosome collision sensor, splitting the ribosome into its 2 subunits. Detects stalled/collided 70S ribosomes which it binds and splits by an ATP-hydrolysis driven conformational change. Acts upstream of the ribosome quality control system (RQC), a ribosome-associated complex that mediates the extraction of incompletely synthesized nascent chains from stalled ribosomes and their subsequent degradation. Probably generates substrates for RQC. The protein is Endonuclease MutS2 of Streptococcus agalactiae serotype III (strain NEM316).